A 117-amino-acid polypeptide reads, in one-letter code: Resistin-like gamma (117 aa).

The signal sequence occupies residues 1–29 (MLTFNKMKTTTCSLLICISLLQLMVPVNT). 5 disulfide bridges follow: cysteine 61–cysteine 114, cysteine 73–cysteine 113, cysteine 82–cysteine 99, cysteine 84–cysteine 101, and cysteine 88–cysteine 103.

The protein belongs to the resistin/FIZZ family. In terms of assembly, homodimer. Heterodimer with RETNLB. In terms of tissue distribution, expressed in colon, lung, spleen, pancreas, ileum and bone marrow (at protein level). In colon, found throughout the crypt and surface epithelium, including goblet cells (at protein level). Highest expression is observed in bone marrow, spleen and lung, with lower levels in other tissues. Detected at low levels in granulocytes, but not found in monocytes or lymphocytes. Has very weak expression in white adipose tissue.

Its subcellular location is the secreted. Its function is as follows. Probable hormone. Promotes chemotaxis in myeloid cells. This chain is Resistin-like gamma, found in Mus musculus (Mouse).